Reading from the N-terminus, the 332-residue chain is MTRMYVGIDHGTSGIKVAAYDGEGDPEFLGKAPRRKVAERGLLRSLPDEARRAVEEAECICLNYGMGDALTEFTPLEEAEDLGVGYGLRDTSGAGREFGAGRRMVEELSELGVEAYLAPGIHRDLPRLDGAFRVFSHVASGEKLGTARLALELSSSKDIVVCDTSSNTVSVVVKDGEVIGGIDACLGAPGVLQGPLDLEAIRRIDAGELSANGAFSTGGIVKIVNCAGEDPESAVEEFIQRCGKEEKEWLARLVAWEVAGLGVVYDCDEAWIGGTLSGDDEFMGVLERVLSKAFNKVAGLPPESASMGLALIAADIASGARSVLGVRISRRP.

Belongs to the UPF0285 family.

This chain is UPF0285 protein MK0078, found in Methanopyrus kandleri (strain AV19 / DSM 6324 / JCM 9639 / NBRC 100938).